Here is a 298-residue protein sequence, read N- to C-terminus: GTPase Era (298 aa).

The region spanning 7–174 (RSGFVSIIGR…VELVRKALPQ (168 aa)) is the Era-type G domain. The segment at 15 to 22 (GRPNVGKS) is G1. 15-22 (GRPNVGKS) provides a ligand contact to GTP. The G2 stretch occupies residues 41 to 45 (QTTRN). The tract at residues 62 to 65 (DTPG) is G3. Residues 62–66 (DTPGI) and 124–127 (NKVD) contribute to the GTP site. The G4 stretch occupies residues 124–127 (NKVD). The interval 153–155 (ISA) is G5. In terms of domain architecture, KH type-2 spans 205–283 (TRDEVPYATA…FLELFVRVRK (79 aa)).

It belongs to the TRAFAC class TrmE-Era-EngA-EngB-Septin-like GTPase superfamily. Era GTPase family. Monomer.

The protein localises to the cytoplasm. It is found in the cell inner membrane. Functionally, an essential GTPase that binds both GDP and GTP, with rapid nucleotide exchange. Plays a role in 16S rRNA processing and 30S ribosomal subunit biogenesis and possibly also in cell cycle regulation and energy metabolism. The protein is GTPase Era of Geobacter metallireducens (strain ATCC 53774 / DSM 7210 / GS-15).